A 408-amino-acid polypeptide reads, in one-letter code: Acetate kinase (408 aa).

Residue Asn-10 participates in Mg(2+) binding. Lys-17 lines the ATP pocket. A substrate-binding site is contributed by Arg-96. The active-site Proton donor/acceptor is Asp-153. ATP-binding positions include 213-217 (HLGNG) and 288-290 (DLR). Residue Glu-393 coordinates Mg(2+).

This sequence belongs to the acetokinase family. In terms of assembly, homodimer. Mg(2+) is required as a cofactor. Mn(2+) serves as cofactor.

The protein resides in the cytoplasm. It carries out the reaction acetate + ATP = acetyl phosphate + ADP. The protein operates within metabolic intermediate biosynthesis; acetyl-CoA biosynthesis; acetyl-CoA from acetate: step 1/2. Catalyzes the formation of acetyl phosphate from acetate and ATP. Can also catalyze the reverse reaction. In Borrelia duttonii (strain Ly), this protein is Acetate kinase.